The sequence spans 629 residues: Proteoglycan Cow (629 aa).

Residues 1–27 form the signal peptide; the sequence is MKHSPLIASACLALVLMSSSLIGSTEA. Disordered regions lie at residues 118–186 and 198–223; these read KRRV…ESKE and GDKQ…DDDE. The segment covering 128 to 143 has biased composition (acidic residues); it reads DSQDAEDINNDDEDNS. The N-linked (GlcNAc...) asparagine glycan is linked to Asn-142. Positions 144 to 159 are enriched in low complexity; the sequence is SDGGSSNSSPTGTNNA. A compositionally biased stretch (acidic residues) spans 167–186; the sequence is EETDDEDKSLSLGDDDESKE. Residues 222 to 273 enclose the Kazal-like domain; the sequence is DEELDNCKPCPVAKPTFLCGADNRTYSSLCRLDYHNCIHSTSIRIACKGFCP. 3 disulfide bridges follow: Cys-228–Cys-258, Cys-231–Cys-251, and Cys-240–Cys-272. A glycan (N-linked (GlcNAc...) asparagine) is linked at Asn-244. Residues 298-356 are disordered; sequence SLDQQQQQQQQQQQQQQQQQAYKDSNNNNIMMNSGNIMGGNNNDFNTIMNDKEDNNRHN. The segment covering 301–340 has biased composition (low complexity); that stretch reads QQQQQQQQQQQQQQQQQAYKDSNNNNIMMNSGNIMGGNNN. 2 EF-hand domains span residues 468–503 and 508–535; these read ACKT…QNER and FIDT…TDRP. Residues Asp-481, Asn-483, Asp-485, Gln-487, and Glu-492 each coordinate Ca(2+). A Thyroglobulin type-1 domain is found at 533–594; that stretch reads DRPCAAVRRR…NTRTRGKPNC (62 aa). 3 cysteine pairs are disulfide-bonded: Cys-536–Cys-555, Cys-566–Cys-573, and Cys-575–Cys-594. Residues 602-629 form a disordered region; that stretch reads ASLTSDDEDEGADDEDSAEGSADQMLVF. The segment covering 606–619 has biased composition (acidic residues); that stretch reads SDDEDEGADDEDSA. The span at 620-629 shows a compositional bias: low complexity; sequence EGSADQMLVF.

Interacts (in heparan sulfate-bound form) with wg. Post-translationally, contains heparan sulfate O-linked oligosaccharides. In the wing disk, detected throughout the disk where it is localized primarily to the apical surface but is also present at the basal surface (at protein level).

It is found in the secreted. Functionally, binds to the Wnt signaling protein wg, stabilizes it and promotes its extracellular distribution. This is required for establishment of a wg gradient during development to allow for regulation of target genes at different levels. This is Proteoglycan Cow from Drosophila melanogaster (Fruit fly).